Reading from the N-terminus, the 532-residue chain is T-complex protein 1 subunit beta (532 aa).

Belongs to the TCP-1 chaperonin family. In terms of assembly, heterooligomeric complex of about 850 to 900 kDa that forms two stacked rings, 12 to 16 nm in diameter.

It is found in the cytoplasm. Functionally, molecular chaperone; assists the folding of proteins upon ATP hydrolysis. Known to play a role, in vitro, in the folding of actin and tubulin. In Dictyostelium discoideum (Social amoeba), this protein is T-complex protein 1 subunit beta (cct2).